A 302-amino-acid polypeptide reads, in one-letter code: uncharacterized protein (302 aa).

Residue Glu48 is part of the active site.

It belongs to the PhzF family.

This is an uncharacterized protein from Clostridium acetobutylicum (strain ATCC 824 / DSM 792 / JCM 1419 / IAM 19013 / LMG 5710 / NBRC 13948 / NRRL B-527 / VKM B-1787 / 2291 / W).